The sequence spans 264 residues: N-carbamoylsarcosine amidase (264 aa).

The active-site Nucleophile is the Cys177. Positions 240-264 (TVPKTLSDPQPEVEAPADPVFAEQH) are disordered.

As to quaternary structure, homotetramer. Sulfate serves as cofactor.

It carries out the reaction N-carbamoylsarcosine + H2O + 2 H(+) = sarcosine + NH4(+) + CO2. It participates in amine and polyamine degradation; creatinine degradation; sarcosine from creatinine: step 3/3. In Arthrobacter sp, this protein is N-carbamoylsarcosine amidase.